The chain runs to 324 residues: Methionyl-tRNA formyltransferase (324 aa).

Residue 114–117 (SLLP) coordinates (6S)-5,6,7,8-tetrahydrofolate.

Belongs to the Fmt family.

The catalysed reaction is L-methionyl-tRNA(fMet) + (6R)-10-formyltetrahydrofolate = N-formyl-L-methionyl-tRNA(fMet) + (6S)-5,6,7,8-tetrahydrofolate + H(+). Attaches a formyl group to the free amino group of methionyl-tRNA(fMet). The formyl group appears to play a dual role in the initiator identity of N-formylmethionyl-tRNA by promoting its recognition by IF2 and preventing the misappropriation of this tRNA by the elongation apparatus. This is Methionyl-tRNA formyltransferase from Azobacteroides pseudotrichonymphae genomovar. CFP2.